Consider the following 354-residue polypeptide: MIDRLEKIQEKYLRISEELNSAKDPSSLKSLYKERSRLTPLYLKVEEYLKIYKDKKDAEELIPSEKDEEMHSMLKEEIRRASKKLEELEKELEILLLTPDPNSGKNILVEIRAGTGGEEAGLFVADLFRMYSKFADKQKIKSEIIDSAPTGIGGLKEIIFALEDERAYDLFKFEGGTHRVQRIPSTESGGRIHTSAVTVAVLPEADEEEIEINENDLRIDVYRSSGAGGQHVNTTDSAVRITHIPTGVVVACQDEKSQHKNKAKALRILSARILEKQTEDKKQASDAIKKQMIGSGDRSERVRTYNFPQGRCTDHRIGFTSHNLSAIMEGDLEELIGALTEEDRARKISETQVH.

Glutamine 230 carries the post-translational modification N5-methylglutamine. Residues 282–301 form a disordered region; that stretch reads KQASDAIKKQMIGSGDRSER.

Belongs to the prokaryotic/mitochondrial release factor family. Methylated by PrmC. Methylation increases the termination efficiency of RF1.

It localises to the cytoplasm. Functionally, peptide chain release factor 1 directs the termination of translation in response to the peptide chain termination codons UAG and UAA. The sequence is that of Peptide chain release factor 1 from Leptospira borgpetersenii serovar Hardjo-bovis (strain L550).